Consider the following 318-residue polypeptide: Mitochondrial coenzyme A transporter SLC25A42 (318 aa).

Solcar repeat units follow at residues 31–117 (RQVL…YKRI), 129–214 (LPPW…LKSL), and 224–312 (PYPF…MQIL). The next 6 membrane-spanning stretches (helical) occupy residues 33-53 (VLSS…AVAP), 89-109 (LWRG…IQFS), 135-155 (LLAG…LDLV), 186-206 (LYFG…LSFF), 230-250 (MVFG…LDVV), and 293-313 (LKGP…QILL).

The protein belongs to the mitochondrial carrier (TC 2.A.29) family. In terms of tissue distribution, widely expressed. Highly expressed in adipose, followed by hypothalamus and brain coronal sections containing corpus callosum, fornix, thalamus, hypothalamus, optic chiasm, pons, midbrain, and cerebellum.

Its subcellular location is the mitochondrion inner membrane. The catalysed reaction is ADP(out) + CoA(in) = ADP(in) + CoA(out). It carries out the reaction 3'-dephospho-CoA(in) + ADP(out) = 3'-dephospho-CoA(out) + ADP(in). It catalyses the reaction adenosine 3',5'-bisphosphate(in) + ADP(out) = adenosine 3',5'-bisphosphate(out) + ADP(in). The enzyme catalyses AMP(in) + ADP(out) = AMP(out) + ADP(in). The catalysed reaction is dADP(in) + ADP(out) = dADP(out) + ADP(in). It carries out the reaction ADP(in) + ATP(out) = ADP(out) + ATP(in). Mitochondrial carrier mediating the transport of coenzyme A (CoA) in mitochondria in exchange for intramitochondrial (deoxy)adenine nucleotides and adenosine 3',5'-diphosphate. The sequence is that of Mitochondrial coenzyme A transporter SLC25A42 (Slc25a42) from Rattus norvegicus (Rat).